Consider the following 328-residue polypeptide: D-alanine--D-alanine ligase (328 aa).

The 200-residue stretch at Leu-118 to Thr-317 folds into the ATP-grasp domain. Lys-146 to Ser-201 lines the ATP pocket. Positions 272, 284, and 286 each coordinate Mg(2+).

The protein belongs to the D-alanine--D-alanine ligase family. Requires Mg(2+) as cofactor. It depends on Mn(2+) as a cofactor.

The protein resides in the cytoplasm. The enzyme catalyses 2 D-alanine + ATP = D-alanyl-D-alanine + ADP + phosphate + H(+). Its pathway is cell wall biogenesis; peptidoglycan biosynthesis. Its function is as follows. Cell wall formation. The chain is D-alanine--D-alanine ligase from Flavobacterium psychrophilum (strain ATCC 49511 / DSM 21280 / CIP 103535 / JIP02/86).